We begin with the raw amino-acid sequence, 236 residues long: Peptidase E (236 aa).

Catalysis depends on charge relay system residues Ser122, Asp137, and His159.

Belongs to the peptidase S51 family.

The protein localises to the cytoplasm. The enzyme catalyses Dipeptidase E catalyzes the hydrolysis of dipeptides Asp-|-Xaa. It does not act on peptides with N-terminal Glu, Asn or Gln, nor does it cleave isoaspartyl peptides.. In terms of biological role, hydrolyzes dipeptides containing N-terminal aspartate residues. May play a role in allowing the cell to use peptide aspartate to spare carbon otherwise required for the synthesis of the aspartate family of amino acids. The chain is Peptidase E from Shewanella sp. (strain W3-18-1).